The following is a 371-amino-acid chain: MPRPIQARIHSSALQANLRRVRQSVPDAKVWAVVKANAYGHGIARVFESLRGADGFALLDLAEAQGLRGLGWRGPILLLEGVFEPRDLELCSRLGLWHVVHCDEQIDMLAAHRSQAPQHVFLKLNAGMNRLGFAPQRYRSAWARLGALAQVDEISLMAHFSDADGPRGIAPQLAAFVRATQDLPGARSLCNSAATLRHAADASVRADWVRAGIVLYGSAPDFPGHDAGHWGLQPAMTLATRLIGVQQLQAGDTVGYGARFVAPGPMAIGVAACGYADGYPLHCGTGTPVLVDGIRTRVVGRVSMDMLTVDLTPLQRAGLQPGFGSEVTLWGRASSGAVLSIDEVAQAGGTLGYELMCALAQRVPVTLDGRA.

The active-site Proton acceptor; specific for D-alanine is the Lys35. Lys35 is modified (N6-(pyridoxal phosphate)lysine). Position 130 (Arg130) interacts with substrate. The Proton acceptor; specific for L-alanine role is filled by Tyr256. Met304 serves as a coordination point for substrate.

The protein belongs to the alanine racemase family. The cofactor is pyridoxal 5'-phosphate.

The enzyme catalyses L-alanine = D-alanine. The protein operates within amino-acid biosynthesis; D-alanine biosynthesis; D-alanine from L-alanine: step 1/1. Catalyzes the interconversion of L-alanine and D-alanine. May also act on other amino acids. This chain is Alanine racemase (alr), found in Verminephrobacter eiseniae (strain EF01-2).